The chain runs to 564 residues: O-fucosyltransferase 6 (564 aa).

Residues 17 to 37 (LLPFICAVSGALLILFALLSI) form a helical; Signal-anchor for type II membrane protein membrane-spanning segment. 2 N-linked (GlcNAc...) asparagine glycosylation sites follow: Asn-95 and Asn-139. 277 to 279 (HLR) is a binding site for substrate. N-linked (GlcNAc...) asparagine glycosylation occurs at Asn-449. Positions 501–512 (MDSRKFGKKEQK) are enriched in basic and acidic residues. Residues 501 to 542 (MDSRKFGKKEQKEDEDAELSSSETDYEEDQTDLQDRGLYNGT) form a disordered region. The segment covering 513–532 (EDEDAELSSSETDYEEDQTD) has biased composition (acidic residues). The N-linked (GlcNAc...) asparagine glycan is linked to Asn-540.

This sequence belongs to the glycosyltransferase GT106 family.

It is found in the membrane. Its pathway is glycan metabolism. This is O-fucosyltransferase 6 from Arabidopsis thaliana (Mouse-ear cress).